The chain runs to 485 residues: Inosine-5'-monophosphate dehydrogenase (485 aa).

2 consecutive CBS domains span residues Ile-99–Glu-154 and Met-156–Glu-215. NAD(+)-binding positions include Asp-247 and Gly-294–Gly-296. K(+) contacts are provided by Gly-296 and Gly-298. Residue Ser-299 coordinates IMP. Cys-301 contacts K(+). Cys-301 serves as the catalytic Thioimidate intermediate. IMP is bound by residues Asp-334 to Gly-336, Gly-357 to Asn-358, and Tyr-381 to Gly-385. The Proton acceptor role is filled by Arg-397. Position 412 (Glu-412) interacts with IMP. K(+)-binding residues include Glu-466, Ser-467, and His-468.

This sequence belongs to the IMPDH/GMPR family. As to quaternary structure, homotetramer. K(+) serves as cofactor.

The catalysed reaction is IMP + NAD(+) + H2O = XMP + NADH + H(+). Its pathway is purine metabolism; XMP biosynthesis via de novo pathway; XMP from IMP: step 1/1. Mycophenolic acid (MPA) is a non-competitive inhibitor that prevents formation of the closed enzyme conformation by binding to the same site as the amobile flap. In contrast, mizoribine monophosphate (MZP) is a competitive inhibitor that induces the closed conformation. MPA is a potent inhibitor of mammalian IMPDHs but a poor inhibitor of the bacterial enzymes. MZP is a more potent inhibitor of bacterial IMPDH. Functionally, catalyzes the conversion of inosine 5'-phosphate (IMP) to xanthosine 5'-phosphate (XMP), the first committed and rate-limiting step in the de novo synthesis of guanine nucleotides, and therefore plays an important role in the regulation of cell growth. This is Inosine-5'-monophosphate dehydrogenase from Pyrococcus abyssi (strain GE5 / Orsay).